Reading from the N-terminus, the 340-residue chain is Ketol-acid reductoisomerase (NADP(+)) (340 aa).

One can recognise a KARI N-terminal Rossmann domain in the interval M1–T182. Residues Y24–Q27, R48, S51, S53, and D83–Q86 contribute to the NADP(+) site. The active site involves H108. G134 is a binding site for NADP(+). Residues N183–I329 enclose the KARI C-terminal knotted domain. Mg(2+) is bound by residues D191, E195, E227, and E231. S252 serves as a coordination point for substrate.

This sequence belongs to the ketol-acid reductoisomerase family. Requires Mg(2+) as cofactor.

The catalysed reaction is (2R)-2,3-dihydroxy-3-methylbutanoate + NADP(+) = (2S)-2-acetolactate + NADPH + H(+). The enzyme catalyses (2R,3R)-2,3-dihydroxy-3-methylpentanoate + NADP(+) = (S)-2-ethyl-2-hydroxy-3-oxobutanoate + NADPH + H(+). Its pathway is amino-acid biosynthesis; L-isoleucine biosynthesis; L-isoleucine from 2-oxobutanoate: step 2/4. It participates in amino-acid biosynthesis; L-valine biosynthesis; L-valine from pyruvate: step 2/4. Involved in the biosynthesis of branched-chain amino acids (BCAA). Catalyzes an alkyl-migration followed by a ketol-acid reduction of (S)-2-acetolactate (S2AL) to yield (R)-2,3-dihydroxy-isovalerate. In the isomerase reaction, S2AL is rearranged via a Mg-dependent methyl migration to produce 3-hydroxy-3-methyl-2-ketobutyrate (HMKB). In the reductase reaction, this 2-ketoacid undergoes a metal-dependent reduction by NADPH to yield (R)-2,3-dihydroxy-isovalerate. This is Ketol-acid reductoisomerase (NADP(+)) from Cereibacter sphaeroides (strain ATCC 17025 / ATH 2.4.3) (Rhodobacter sphaeroides).